The chain runs to 334 residues: Holliday junction branch migration complex subunit RuvB (334 aa).

The segment at 1-181 is large ATPase domain (RuvB-L); sequence MQDRLISGTE…FGIVQRLEFY (181 aa). Residues isoleucine 20, arginine 21, glycine 62, lysine 65, threonine 66, threonine 67, 128–130, arginine 171, tyrosine 181, and arginine 218 each bind ATP; that span reads EDY. Threonine 66 provides a ligand contact to Mg(2+). Positions 182-252 are small ATPAse domain (RuvB-S); it reads SVEDLTHIVS…MAQRALDMLN (71 aa). Residues 255-334 are head domain (RuvB-H); that stretch reads KAGLDTLDRR…FGMTPPEPKN (80 aa). DNA contacts are provided by arginine 310 and arginine 315.

Belongs to the RuvB family. In terms of assembly, homohexamer. Forms an RuvA(8)-RuvB(12)-Holliday junction (HJ) complex. HJ DNA is sandwiched between 2 RuvA tetramers; dsDNA enters through RuvA and exits via RuvB. An RuvB hexamer assembles on each DNA strand where it exits the tetramer. Each RuvB hexamer is contacted by two RuvA subunits (via domain III) on 2 adjacent RuvB subunits; this complex drives branch migration. In the full resolvosome a probable DNA-RuvA(4)-RuvB(12)-RuvC(2) complex forms which resolves the HJ.

The protein resides in the cytoplasm. It catalyses the reaction ATP + H2O = ADP + phosphate + H(+). In terms of biological role, the RuvA-RuvB-RuvC complex processes Holliday junction (HJ) DNA during genetic recombination and DNA repair, while the RuvA-RuvB complex plays an important role in the rescue of blocked DNA replication forks via replication fork reversal (RFR). RuvA specifically binds to HJ cruciform DNA, conferring on it an open structure. The RuvB hexamer acts as an ATP-dependent pump, pulling dsDNA into and through the RuvAB complex. RuvB forms 2 homohexamers on either side of HJ DNA bound by 1 or 2 RuvA tetramers; 4 subunits per hexamer contact DNA at a time. Coordinated motions by a converter formed by DNA-disengaged RuvB subunits stimulates ATP hydrolysis and nucleotide exchange. Immobilization of the converter enables RuvB to convert the ATP-contained energy into a lever motion, pulling 2 nucleotides of DNA out of the RuvA tetramer per ATP hydrolyzed, thus driving DNA branch migration. The RuvB motors rotate together with the DNA substrate, which together with the progressing nucleotide cycle form the mechanistic basis for DNA recombination by continuous HJ branch migration. Branch migration allows RuvC to scan DNA until it finds its consensus sequence, where it cleaves and resolves cruciform DNA. The chain is Holliday junction branch migration complex subunit RuvB from Acinetobacter baumannii (strain AB307-0294).